We begin with the raw amino-acid sequence, 187 residues long: Accessory gene regulator protein B (187 aa).

5 consecutive transmembrane segments (helical) span residues 49-69 (LAYI…FYLI), 82-102 (FWCY…VLHF), 107-127 (TLMM…APAA), 143-163 (YFSI…KEPY), and 164-184 (TQFI…IYYS).

This sequence belongs to the AgrB family.

The protein localises to the cell membrane. In terms of biological role, essential for the production of a quorum sensing system signal molecule, the autoinducing peptide (AIP). This quorum sensing system is responsible for the regulation of the expression of virulence factor genes. Involved in the proteolytic processing of AgrD, the precursor of AIP. The polypeptide is Accessory gene regulator protein B (Staphylococcus aureus (strain MRSA252)).